Reading from the N-terminus, the 150-residue chain is Large ribosomal subunit protein bL9 (150 aa).

Belongs to the bacterial ribosomal protein bL9 family.

In terms of biological role, binds to the 23S rRNA. This is Large ribosomal subunit protein bL9 from Shewanella baltica (strain OS155 / ATCC BAA-1091).